A 661-amino-acid polypeptide reads, in one-letter code: Threonine--tRNA ligase (661 aa).

In terms of domain architecture, TGS spans 1–64; it reads MSQAISLTFP…TTGRIEIITR (64 aa). The tract at residues 245–546 is catalytic; it reads DHRRLGREMD…LIENFAGHMP (302 aa). Residues C341, H392, and H523 each coordinate Zn(2+).

The protein belongs to the class-II aminoacyl-tRNA synthetase family. In terms of assembly, homodimer. Zn(2+) serves as cofactor.

The protein localises to the cytoplasm. It catalyses the reaction tRNA(Thr) + L-threonine + ATP = L-threonyl-tRNA(Thr) + AMP + diphosphate + H(+). Catalyzes the attachment of threonine to tRNA(Thr) in a two-step reaction: L-threonine is first activated by ATP to form Thr-AMP and then transferred to the acceptor end of tRNA(Thr). Also edits incorrectly charged L-seryl-tRNA(Thr). The chain is Threonine--tRNA ligase from Rhizobium johnstonii (strain DSM 114642 / LMG 32736 / 3841) (Rhizobium leguminosarum bv. viciae).